Here is a 582-residue protein sequence, read N- to C-terminus: 2-succinyl-5-enolpyruvyl-6-hydroxy-3-cyclohexene-1-carboxylate synthase (582 aa).

The protein belongs to the TPP enzyme family. MenD subfamily. In terms of assembly, homodimer. The cofactor is Mg(2+). Mn(2+) is required as a cofactor. Thiamine diphosphate serves as cofactor.

It carries out the reaction isochorismate + 2-oxoglutarate + H(+) = 5-enolpyruvoyl-6-hydroxy-2-succinyl-cyclohex-3-ene-1-carboxylate + CO2. Its pathway is quinol/quinone metabolism; 1,4-dihydroxy-2-naphthoate biosynthesis; 1,4-dihydroxy-2-naphthoate from chorismate: step 2/7. The protein operates within quinol/quinone metabolism; menaquinone biosynthesis. Catalyzes the thiamine diphosphate-dependent decarboxylation of 2-oxoglutarate and the subsequent addition of the resulting succinic semialdehyde-thiamine pyrophosphate anion to isochorismate to yield 2-succinyl-5-enolpyruvyl-6-hydroxy-3-cyclohexene-1-carboxylate (SEPHCHC). The sequence is that of 2-succinyl-5-enolpyruvyl-6-hydroxy-3-cyclohexene-1-carboxylate synthase from Chlorobaculum tepidum (strain ATCC 49652 / DSM 12025 / NBRC 103806 / TLS) (Chlorobium tepidum).